The chain runs to 401 residues: Nicotinate phosphoribosyltransferase (401 aa).

His224 bears the Phosphohistidine; by autocatalysis mark.

The protein belongs to the NAPRTase family. Transiently phosphorylated on a His residue during the reaction cycle. Phosphorylation strongly increases the affinity for substrates and increases the rate of nicotinate D-ribonucleotide production. Dephosphorylation regenerates the low-affinity form of the enzyme, leading to product release.

The enzyme catalyses nicotinate + 5-phospho-alpha-D-ribose 1-diphosphate + ATP + H2O = nicotinate beta-D-ribonucleotide + ADP + phosphate + diphosphate. The protein operates within cofactor biosynthesis; NAD(+) biosynthesis; nicotinate D-ribonucleotide from nicotinate: step 1/1. Its function is as follows. Catalyzes the synthesis of beta-nicotinate D-ribonucleotide from nicotinate and 5-phospho-D-ribose 1-phosphate at the expense of ATP. In Pseudomonas putida (strain ATCC 47054 / DSM 6125 / CFBP 8728 / NCIMB 11950 / KT2440), this protein is Nicotinate phosphoribosyltransferase.